A 367-amino-acid polypeptide reads, in one-letter code: MNTAVTTANSEKAKALQAALAQIEKQFGKGTIMRLGEGEAIQDIQVVSTGSLGLDIALGVGGLPRGRVIEIYGPESSGKTTLTLQVIAEMQKQGGTCAFIDAEHALDTSYAQKLGVNLNEVLISQPDTGEQALEIVDSLVRSGAVDMIVVDSVAALTPRAEIEGEMGDQLPGLQARLMSQALRKLTATIKKTNCMVIFINQIRMKIGVMFGSPETTTGGNALKFYASVRLDIRRTGTIKKGDEAIGNETKVKVVKNKVSPPFKTAEFDILFGEGISREGEILDMGVNAKILDKSGAWYAYNGEKIGQGRDNAREFLRENSGLAVEIENKVRDSLGIALLPTAGGDAPEAKAAKAGKAKADKDGVIEA.

73-80 (GPESSGKT) is a binding site for ATP.

This sequence belongs to the RecA family.

Its subcellular location is the cytoplasm. In terms of biological role, can catalyze the hydrolysis of ATP in the presence of single-stranded DNA, the ATP-dependent uptake of single-stranded DNA by duplex DNA, and the ATP-dependent hybridization of homologous single-stranded DNAs. It interacts with LexA causing its activation and leading to its autocatalytic cleavage. The protein is Protein RecA of Delftia acidovorans (strain DSM 14801 / SPH-1).